Here is a 1076-residue protein sequence, read N- to C-terminus: Probable cellulose synthase A catalytic subunit 1 [UDP-forming] (1076 aa).

Residues 1–267 (MAANAGMVAG…SRIVPIPSNQ (267 aa)) are Cytoplasmic-facing. Zn(2+) contacts are provided by cysteine 41, cysteine 44, cysteine 60, cysteine 63, cysteine 68, cysteine 71, cysteine 83, and cysteine 86. An RING-type; degenerate zinc finger spans residues 41-87 (CQICGDTVGVSATGDVFVACNECAFPVCRPCYEYERKEGNQCCPQCK). A disordered region spans residues 119 to 179 (HGNGKGPEWQ…HSIRSGTSSY (61 aa)). The chain crosses the membrane as a helical span at residues 268–288 (LNLYRIVIILRLIILMFFFQY). The Extracellular portion of the chain corresponds to 289–296 (RVTHPVRD). A helical transmembrane segment spans residues 297–317 (AYGLWLVSVICEIWFALSWLL). Residues 318-851 (DQFPKWYPIN…LLERLAYINT (534 aa)) lie on the Cytoplasmic side of the membrane. Serine 356, lysine 362, glutamate 363, and aspartate 392 together coordinate UDP-alpha-D-glucose. Aspartate 392 is an active-site residue. Residues 446–473 (VKERRAMKREYEEFKVRINALVAKAQKV) are a coiled coil. Lysine 533 serves as a coordination point for UDP-alpha-D-glucose. Mn(2+) is bound by residues lysine 534 and aspartate 558. Aspartate 775 is an active-site residue. A helical membrane pass occupies residues 852–872 (IVYPITSIPLIAYCVLPAICL). The Extracellular segment spans residues 873 to 884 (LTNKFIIPEISN). A helical membrane pass occupies residues 885–905 (YAGMFFILLFASIFATGILEL). Residues 906–920 (RWSGVGIEDWWRNEQ) lie on the Cytoplasmic side of the membrane. The chain crosses the membrane as a helical span at residues 921–941 (FWVIGGTSAHLFAVFQGLLKV). Topologically, residues 942 to 971 (LAGIDTNFTVTSKASDEDGDFAELYVFKWT) are extracellular. Asparagine 948 carries an N-linked (GlcNAc...) asparagine glycan. Residues 972 to 992 (SLLIPPTTVLVINLVGMVAGI) traverse the membrane as a helical segment. Residues 993–1003 (SYAINSGYQSW) lie on the Cytoplasmic side of the membrane. The helical transmembrane segment at 1004-1024 (GPLFGKLFFSIWVILHLYPFL) threads the bilayer. Residues 1025–1033 (KGLMGRQNR) are Extracellular-facing. The chain crosses the membrane as a helical span at residues 1034–1054 (TPTIVIVWSILLASIFSLLWV). Topologically, residues 1055-1076 (KIDPFISPTQKAVALGQCGVNC) are cytoplasmic.

It belongs to the glycosyltransferase 2 family. Plant cellulose synthase subfamily. Requires Zn(2+) as cofactor. Mn(2+) serves as cofactor.

It localises to the cell membrane. It carries out the reaction [(1-&gt;4)-beta-D-glucosyl](n) + UDP-alpha-D-glucose = [(1-&gt;4)-beta-D-glucosyl](n+1) + UDP + H(+). It participates in glycan metabolism; plant cellulose biosynthesis. Functionally, catalytic subunit of cellulose synthase terminal complexes ('rosettes'), required for beta-1,4-glucan microfibril crystallization, a major mechanism of the cell wall formation. The chain is Probable cellulose synthase A catalytic subunit 1 [UDP-forming] (CESA1) from Oryza sativa subsp. indica (Rice).